We begin with the raw amino-acid sequence, 479 residues long: F-box protein SKIP17 (479 aa).

Residues 92–138 form the F-box domain; that stretch reads NSNSWSLPPELTIKVFSMLDTKSMMQAAVCCTMFNKCAMDRLCYSHI. The disordered stretch occupies residues 435 to 479; the sequence is EMMEAEDDEVDEEDDSDDDTDDVSDEDESENDDDMGMGFDVDYLL. Over residues 437 to 469 the composition is skewed to acidic residues; it reads MEAEDDEVDEEDDSDDDTDDVSDEDESENDDDM.

Part of a SCF (ASK-cullin-F-box) protein ligase complex. Interacts with SPK1B/ASK2.

Its subcellular location is the nucleus. It participates in protein modification; protein ubiquitination. In terms of biological role, component of SCF(ASK-cullin-F-box) E3 ubiquitin ligase complexes, which may mediate the ubiquitination and subsequent proteasomal degradation of target proteins. The chain is F-box protein SKIP17 (SKIP17) from Arabidopsis thaliana (Mouse-ear cress).